The chain runs to 1050 residues: MEPGRGGTETVGKFEFSRKDLIGHGAFAVVFKGRHREKHDLEVAVKCINKKNLAKSQTLLGKEIKILKELKHENIVALYDFQEMANSVYLVMEYCNGGDLADYLHAMRTLSEDTIRLFLQQIAGAMRLLHSKGIIHRDLKPQNILLSNPAGRRANPNSIRVKIADFGFARYLQSNMMAATLCGSPMYMAPEVIMSQHYDGKADLWSIGTIVYQCLTGKAPFQASSPQDLRLFYEKNKTLVPTIPRETSAPLRQLLLALLQRNHKDRMDFDEFFHHPFLDASPSVRKSPPVPVPSYPSSGSGSSSSSSSTSHLASPPSLGEMQQLQKTLASPADTAGFLHSSRDSGGSKDSSCDTDDFVMVPAQFPGDLVAEAPSAKPPPDSLMCSGSSLVASAGLESHGRTPSPSPPCSSSPSPSGRAGPFSSSRCGASVPIPVPTQVQNYQRIERNLQSPTQFQTPRSSAIRRSGSTSPLGFARASPSPPAHAEHGGVLARKMSLGGGRPYTPSPQVGTIPERPGWSGTPSPQGAEMRGGRSPRPGSSAPEHSPRTSGLGCRLHSAPNLSDLHVVRPKLPKPPTDPLGAVFSPPQASPPQPSHGLQSCRNLRGSPKLPDFLQRNPLPPILGSPTKAVPSFDFPKTPSSQNLLALLARQGVVMTPPRNRTLPDLSEVGPFHGQPLGPGLRPGEDPKGPFGRSFSTSRLTDLLLKAAFGTQAPDPGSTESLQEKPMEIAPSAGFGGSLHPGARAGGTSSPSPVVFTVGSPPSGSTPPQGPRTRMFSAGPTGSASSSARHLVPGPCSEAPAPELPAPGHGCSFADPITANLEGAVTFEAPDLPEETLMEQEHTEILRGLRFTLLFVQHVLEIAALKGSASEAAGGPEYQLQESVVADQISLLSREWGFAEQLVLYLKVAELLSSGLQSAIDQIRAGKLCLSSTVKQVVRRLNELYKASVVSCQGLSLRLQRFFLDKQRLLDRIHSITAERLIFSHAVQMVQSAALDEMFQHREGCVPRYHKALLLLEGLQHMLSDQADIENVTKCKLCIERRLSALLTGICA.

One can recognise a Protein kinase domain in the interval 16–278; that stretch reads FSRKDLIGHG…FDEFFHHPFL (263 aa). Residues 22 to 30 and Lys46 each bind ATP; that span reads IGHGAFAVV. The active-site Proton acceptor is Asp138. At Lys162 the chain carries N6-acetyllysine. Disordered stretches follow at residues 283-358 and 393-608; these read SVRK…DDFV and AGLE…SPKL. Residues 287–416 are interaction with GABARAP and GABARAPL2; the sequence is SPPVPVPSYP…PCSSSPSPSG (130 aa). Residues 295 to 317 are compositionally biased toward low complexity; sequence YPSSGSGSSSSSSSTSHLASPPS. Ser317 carries the post-translational modification Phosphoserine; by AMPK. Ser403 bears the Phosphoserine mark. Residues 410–425 show a composition bias toward low complexity; that stretch reads SSPSPSGRAGPFSSSR. Residues 436–459 are compositionally biased toward polar residues; sequence TQVQNYQRIERNLQSPTQFQTPRS. Ser450 bears the Phosphoserine mark. A Phosphothreonine modification is found at Thr456. Residues Ser467, Ser469, Ser477, Ser479, and Ser522 each carry the phosphoserine modification. Ser556 carries the post-translational modification Phosphoserine; by AMPK. Thr575 carries the phosphothreonine modification. Lys607 carries the N6-acetyllysine modification. Thr636 is subject to Phosphothreonine. A phosphoserine mark is found at Ser638 and Ser639. Residues 728 to 791 form a disordered region; it reads APSAGFGGSL…ASSSARHLVP (64 aa). At Ser758 the chain carries Phosphoserine; by MTOR. The residue at position 775 (Ser775) is a Phosphoserine. The segment covering 775-786 has biased composition (low complexity); it reads SAGPTGSASSSA. Residues 828 to 1050 form a C-terminal domain; mediates interaction with SESN2 region; that stretch reads PDLPEETLME…LSALLTGICA (223 aa).

The protein belongs to the protein kinase superfamily. Ser/Thr protein kinase family. APG1/unc-51/ULK1 subfamily. As to quaternary structure, interacts with GABARAP and GABARAPL2. Interacts (via C-terminus) with ATG13. Part of a complex consisting of ATG13, ATG101, ULK1 and RB1CC1. Associates with the mammalian target of rapamycin complex 1 (mTORC1) through an interaction with RPTOR; the association depends on nutrient conditions and is reduced during starvation. Interacts with FEZ1; SCOC interferes with FEZ1-binding. Interacts with TBC1D14. Interacts (phosphorylated form) with TRIM5. When phosphorylated at Ser-317, interacts with MEFV and BECN1 simultaneously. Interacts with TRIM21 and IRF3, in the presence of TRIM21. Interacts with SESN2. Interacts with SQSTM1. Interacts with C9orf72. Interacts with WDR45. Interacts with ATG13; this interaction is increased in the absence of TMEM39A. Interacts with WIPI2. Interacts with ATP2A2. Interacts with AMBRA1. Interacts with IRGM; promoting the coassembly of ULK1 and BECN1. In terms of processing, autophosphorylated. Phosphorylated under nutrient-rich conditions; dephosphorylated during starvation or following treatment with rapamycin. Under nutrient sufficiency, phosphorylated by MTOR/mTOR, disrupting the interaction with AMPK and preventing activation of ULK1. In response to nutrient limitation, phosphorylated and activated by AMPK, leading to activate autophagy. Post-translationally, ubiquitinated via 'Lys-63'-linkage by a complex composed of AMBRA1 and TRAF6 following autophagy induction, promoting ULK1 stability and kinase activity. Deubiquitinated by USP20; leading to ULK1 stability and autophagy initiation. Acetylated by KAT5/TIP60 under autophagy induction, promoting protein kinase activity. In terms of tissue distribution, ubiquitously expressed. Detected in the following adult tissues: skeletal muscle, heart, pancreas, brain, placenta, liver, kidney, and lung.

The protein localises to the cytoplasm. The protein resides in the cytosol. Its subcellular location is the preautophagosomal structure. The enzyme catalyses L-seryl-[protein] + ATP = O-phospho-L-seryl-[protein] + ADP + H(+). It carries out the reaction L-threonyl-[protein] + ATP = O-phospho-L-threonyl-[protein] + ADP + H(+). Acetylation by KAT5/TIP60 stimulates the protein kinase activity. The protein kinase activity is activated by unanchored 'Lys-63'-linked polyubiquitin chains: unanchored 'Lys-63'-linked polyubiquitin chains are catalyzed by TRIM32 in an AMBRA1-dependent manner. Its function is as follows. Serine/threonine-protein kinase involved in autophagy in response to starvation. Acts upstream of phosphatidylinositol 3-kinase PIK3C3 to regulate the formation of autophagophores, the precursors of autophagosomes. Part of regulatory feedback loops in autophagy: acts both as a downstream effector and negative regulator of mammalian target of rapamycin complex 1 (mTORC1) via interaction with RPTOR. Activated via phosphorylation by AMPK and also acts as a regulator of AMPK by mediating phosphorylation of AMPK subunits PRKAA1, PRKAB2 and PRKAG1, leading to negatively regulate AMPK activity. May phosphorylate ATG13/KIAA0652 and RPTOR; however such data need additional evidences. Plays a role early in neuronal differentiation and is required for granule cell axon formation. Also phosphorylates SESN2 and SQSTM1 to regulate autophagy. Phosphorylates FLCN, promoting autophagy. Phosphorylates AMBRA1 in response to autophagy induction, releasing AMBRA1 from the cytoskeletal docking site to induce autophagosome nucleation. Phosphorylates ATG4B, leading to inhibit autophagy by decreasing both proteolytic activation and delipidation activities of ATG4B. This Homo sapiens (Human) protein is Serine/threonine-protein kinase ULK1.